We begin with the raw amino-acid sequence, 527 residues long: Catalase (527 aa).

Alanine 2 carries the N-acetylalanine modification. Serine 9 carries the post-translational modification Phosphoserine. Catalysis depends on residues histidine 75 and asparagine 148. Positions 194, 201, 203, and 213 each coordinate NADP(+). Lysine 221 is subject to N6-succinyllysine. N6-acetyllysine is present on lysine 233. Positions 237, 303, 305, and 306 each coordinate NADP(+). Residue lysine 306 is modified to N6-acetyllysine; alternate. Lysine 306 carries the post-translational modification N6-succinyllysine; alternate. Heme is bound at residue tyrosine 358. 2 positions are modified to phosphoserine: serine 417 and serine 422. At lysine 480 the chain carries N6-acetyllysine; alternate. Lysine 480 is subject to N6-succinyllysine; alternate. Position 499 is an N6-acetyllysine (lysine 499). A Phosphothreonine modification is found at threonine 511. Phosphoserine is present on residues serine 515 and serine 517. A Microbody targeting signal; atypical motif is present at residues 524–527 (KANL).

It belongs to the catalase family. In terms of assembly, homotetramer. Interacts (via microbody targeting signal) with PEX5, monomeric form interacts with PEX5, leading to its translocation into peroxisomes. The cofactor is heme. NADP(+) serves as cofactor.

It is found in the peroxisome matrix. The enzyme catalyses 2 H2O2 = O2 + 2 H2O. Catalyzes the degradation of hydrogen peroxide (H(2)O(2)) generated by peroxisomal oxidases to water and oxygen, thereby protecting cells from the toxic effects of hydrogen peroxide. Promotes growth of cells including T-cells, B-cells, myeloid leukemia cells, melanoma cells, mastocytoma cells and normal and transformed fibroblast cells. The chain is Catalase (CAT) from Homo sapiens (Human).